Here is a 191-residue protein sequence, read N- to C-terminus: dCTP deaminase, dUMP-forming (191 aa).

Residues K101–R106, D119, T127–E129, Q148, Y162, and Q174 contribute to the dCTP site. Residue E129 is the Proton donor/acceptor of the active site. The tract at residues G163–I191 is disordered. Polar residues predominate over residues Y171 to I191.

Belongs to the dCTP deaminase family. As to quaternary structure, homotrimer.

The catalysed reaction is dCTP + 2 H2O = dUMP + NH4(+) + diphosphate. Its pathway is pyrimidine metabolism; dUMP biosynthesis; dUMP from dCTP: step 1/1. Functionally, bifunctional enzyme that catalyzes both the deamination of dCTP to dUTP and the hydrolysis of dUTP to dUMP without releasing the toxic dUTP intermediate. The protein is dCTP deaminase, dUMP-forming of Acidothermus cellulolyticus (strain ATCC 43068 / DSM 8971 / 11B).